The chain runs to 53 residues: Small ribosomal subunit protein uS14 (53 aa).

Positions 17, 20, 36, and 39 each coordinate Zn(2+).

The protein belongs to the universal ribosomal protein uS14 family. Zinc-binding uS14 subfamily. Part of the 30S ribosomal subunit. The cofactor is Zn(2+).

In terms of biological role, binds 16S rRNA, required for the assembly of 30S particles. The chain is Small ribosomal subunit protein uS14 from Methanocaldococcus jannaschii (strain ATCC 43067 / DSM 2661 / JAL-1 / JCM 10045 / NBRC 100440) (Methanococcus jannaschii).